The chain runs to 1027 residues: Xyloglucanase (1027 aa).

A signal peptide spans 1-32; it reads MKTFLGKKLWMASLAVALAAGSFAALPEMTSA. Catalysis depends on Asp70, which acts as the Nucleophile. BNR repeat units follow at residues 134–143, 185–196, 252–262, and 357–367; these read RSTDRGDTWQ, WRSSDYGATWSK, YRSTDGGATWT, and FRSKDGGTTWT. Catalysis depends on Asp479, which acts as the Proton donor. 2 BNR repeats span residues 537 to 545 and 717 to 727; these read SSDGGTNWY and FRSDDGGASWV. Residues 876–1027 enclose the CBM3 domain; sequence PEGSIRIEMY…SGTLQWGIEP (152 aa).

Belongs to the glycosyl hydrolase 74 family.

Functionally, hydrolyzes the glucosidic bonds of unbranched Glc residues in tamarind seed xyloglucan, producing XXXG, XLXG, XXLG and XLLG. May have a dual endo- and exo- mode of action towards xyloglucan, or may have an endo-processive mode of action. This Paenibacillus sp protein is Xyloglucanase.